The primary structure comprises 258 residues: Imidazole glycerol phosphate synthase subunit HisF (258 aa).

Catalysis depends on residues Asp-11 and Asp-130.

The protein belongs to the HisA/HisF family. Heterodimer of HisH and HisF.

Its subcellular location is the cytoplasm. The enzyme catalyses 5-[(5-phospho-1-deoxy-D-ribulos-1-ylimino)methylamino]-1-(5-phospho-beta-D-ribosyl)imidazole-4-carboxamide + L-glutamine = D-erythro-1-(imidazol-4-yl)glycerol 3-phosphate + 5-amino-1-(5-phospho-beta-D-ribosyl)imidazole-4-carboxamide + L-glutamate + H(+). Its pathway is amino-acid biosynthesis; L-histidine biosynthesis; L-histidine from 5-phospho-alpha-D-ribose 1-diphosphate: step 5/9. In terms of biological role, IGPS catalyzes the conversion of PRFAR and glutamine to IGP, AICAR and glutamate. The HisF subunit catalyzes the cyclization activity that produces IGP and AICAR from PRFAR using the ammonia provided by the HisH subunit. This is Imidazole glycerol phosphate synthase subunit HisF from Roseiflexus sp. (strain RS-1).